The following is a 549-amino-acid chain: MQADYIIIGSGSAGSALAHRLSEDSRNSVIVLEFGGTDIGPFIQMPAALAWPMSMNRYNWGYLSEPEPHLNNRRITAPRGKVIGGSSSINGMVYVRGHAEDFDRWEQLGAKGWAYADVLPYFKRMEHSHGGEDGWRGTDGPLHVQRGPVKNPLFHAFVEAGKQAGFEMTDDYNGSKQEGFGLMEQTTWRGRRWSAASAYLKPALKRPNVQLIRCFARKIVIENGRATGVEIERGGRIEVVKANREVIVSASSFNSPKLLMLSGIGPAAHLKDLGIDVKVDRPGVGQNLQDHMEFYFQQISTKPVSLYSWLPWFWQGVAGAQWLFFKSGLGISNQFEACAFLRSAPGVKQPDIQYHFLPVAIRYDGKAAANTHGFQVHVGYNLSKSRGSVTLRASDPKADPVIRFNYMSHPEDWEKFRHCVRLTREIFGQKAFDQYRGPEIQPGERVQTDEEIDAFLREHLESAYHPCGTCKMGSKDDPMAVVDPETRVIGVDGLRVADSSIFPHVTYGNLNAPSIMTGEKAADHILGKQPLARSNQEPWINPRWAISDR.

FAD is bound at residue D4 to E33. H465 (proton acceptor) is an active-site residue.

The protein belongs to the GMC oxidoreductase family. Requires FAD as cofactor.

The catalysed reaction is choline + A = betaine aldehyde + AH2. It catalyses the reaction betaine aldehyde + NAD(+) + H2O = glycine betaine + NADH + 2 H(+). The protein operates within amine and polyamine biosynthesis; betaine biosynthesis via choline pathway; betaine aldehyde from choline (cytochrome c reductase route): step 1/1. Involved in the biosynthesis of the osmoprotectant glycine betaine. Catalyzes the oxidation of choline to betaine aldehyde and betaine aldehyde to glycine betaine at the same rate. The polypeptide is Oxygen-dependent choline dehydrogenase (Sinorhizobium fredii (strain NBRC 101917 / NGR234)).